The sequence spans 320 residues: Malate dehydrogenase (320 aa).

NAD(+) is bound by residues 10-15 (GSGMIG) and Asp-34. Substrate contacts are provided by Arg-83 and Arg-89. NAD(+)-binding positions include Asn-96 and 119–121 (ITN). Residues Asn-121 and Arg-152 each contribute to the substrate site. His-176 acts as the Proton acceptor in catalysis.

The protein belongs to the LDH/MDH superfamily. MDH type 3 family.

The catalysed reaction is (S)-malate + NAD(+) = oxaloacetate + NADH + H(+). Functionally, catalyzes the reversible oxidation of malate to oxaloacetate. This Rhizobium etli (strain CIAT 652) protein is Malate dehydrogenase.